The following is a 334-amino-acid chain: GTP 3',8-cyclase (334 aa).

Positions 11 to 236 (GFNRKIDYLR…ESTESSQGPA (226 aa)) constitute a Radical SAM core domain. Residue arginine 20 coordinates GTP. [4Fe-4S] cluster-binding residues include cysteine 27 and cysteine 31. Tyrosine 33 provides a ligand contact to S-adenosyl-L-methionine. Position 34 (cysteine 34) interacts with [4Fe-4S] cluster. Arginine 69 serves as a coordination point for GTP. Residue glycine 73 coordinates S-adenosyl-L-methionine. A GTP-binding site is contributed by threonine 100. Serine 124 contributes to the S-adenosyl-L-methionine binding site. Lysine 161 contributes to the GTP binding site. Residue methionine 195 participates in S-adenosyl-L-methionine binding. [4Fe-4S] cluster is bound by residues cysteine 260 and cysteine 263. 265-267 (RVR) contacts GTP. Cysteine 277 contacts [4Fe-4S] cluster.

Belongs to the radical SAM superfamily. MoaA family. Monomer and homodimer. [4Fe-4S] cluster serves as cofactor.

The enzyme catalyses GTP + AH2 + S-adenosyl-L-methionine = (8S)-3',8-cyclo-7,8-dihydroguanosine 5'-triphosphate + 5'-deoxyadenosine + L-methionine + A + H(+). The protein operates within cofactor biosynthesis; molybdopterin biosynthesis. Catalyzes the cyclization of GTP to (8S)-3',8-cyclo-7,8-dihydroguanosine 5'-triphosphate. This Pseudomonas putida (strain GB-1) protein is GTP 3',8-cyclase.